Reading from the N-terminus, the 767-residue chain is U3 small nucleolar RNA-associated protein 14 homolog A (767 aa).

Residues 23–49 (TSNYPLSASEDEGDSDGERKHQKLLEA) are disordered. Phosphoserine is present on residues serine 29, serine 31, serine 37, serine 52, serine 77, and serine 81. Lysine 122 is covalently cross-linked (Glycyl lysine isopeptide (Lys-Gly) (interchain with G-Cter in SUMO2)). Threonine 205 carries the phosphothreonine modification. Positions 317–346 (LEARQAMQEQLAKNKELTQKLQVVSESEEE) form a coiled coil. Positions 338 to 554 (QVVSESEEEG…SKGKNKKEQM (217 aa)) are disordered. Residues 342-355 (ESEEEGGADEEEAL) are compositionally biased toward acidic residues. Over residues 398–433 (AAHEFPENEENDKPVAEEDELLKELEKRRSLRKRSE) the composition is skewed to basic and acidic residues. Arginine 431 is subject to Citrulline. Residue lysine 447 forms a Glycyl lysine isopeptide (Lys-Gly) (interchain with G-Cter in SUMO2) linkage. Serine 451 bears the Phosphoserine mark. Over residues 486–498 (VWEEEPAPEEDEP) the composition is skewed to acidic residues. Residues 503–538 (RPERMRTLEELEELGKEDSLPNKERPRPSVEGEQVR) show a composition bias toward basic and acidic residues. Lysine 518 participates in a covalent cross-link: Glycyl lysine isopeptide (Lys-Gly) (interchain with G-Cter in SUMO2). Arginine 586 carries the citrulline modification. Positions 730 to 767 (TAEDVDCRSSPRSDVPVMQSNPKQHSKHQKQRKKSSIG) are disordered. The segment covering 753–767 (QHSKHQKQRKKSSIG) has biased composition (basic residues).

This sequence belongs to the UTP14 family. Interacts with DHX37. In terms of processing, citrullinated by PADI4. Ubiquitously expressed.

The protein localises to the nucleus. Its subcellular location is the nucleolus. Its function is as follows. May be required for ribosome biogenesis. This chain is U3 small nucleolar RNA-associated protein 14 homolog A (Utp14a), found in Mus musculus (Mouse).